We begin with the raw amino-acid sequence, 1588 residues long: Paternally-expressed gene 3 protein (1588 aa).

Residues H46 to Y128 enclose the SCAN box domain. 3 disordered regions span residues Y128 to V231, G265 to I304, and K317 to D347. Over residues Q129 to D142 the composition is skewed to acidic residues. Composition is skewed to basic and acidic residues over residues D143–S152, F160–S181, F205–D224, and P293–I304. C2H2-type zinc fingers lie at residues Y452–H474, F505–H527, and Y563–H585. The segment covering D588 to T607 has biased composition (basic and acidic residues). Positions D588 to F608 are disordered. A C2H2-type 4 zinc finger spans residues Y627 to H649. Disordered regions lie at residues V839–R889 and Q905–V929. The segment covering L868 to P881 has biased composition (basic and acidic residues). A C2H2-type 5 zinc finger spans residues Y969–H991. Residues E1056–D1104 form a disordered region. Residues E1071–E1082 are compositionally biased toward basic and acidic residues. 5 consecutive C2H2-type zinc fingers follow at residues Y1107–H1129, Y1163–H1185, I1225–H1247, F1282–H1304, and Y1332–H1354. Residues E1396–A1415 are compositionally biased toward acidic residues. The segment at E1396 to D1495 is disordered. Tandem repeats lie at residues P1397–E1403, P1404–E1410, P1411–E1417, P1418–A1422, P1425–A1429, P1432–A1436, and P1439–A1443. The segment at P1397–E1417 is 3 X 7 AA repeat of P-E-V-E-A-A-E. Residues P1418–A1443 are 4 X 5 AA repeat of P-X-G-E-A. Composition is skewed to acidic residues over residues D1449 to E1466 and P1475 to D1495. C2H2-type zinc fingers lie at residues Y1505–H1527 and F1564–H1586.

This sequence belongs to the krueppel C2H2-type zinc-finger protein family. In terms of assembly, homodimer. Interacts with SIAH1A and SIAH2. Interacts with TRAF2. As to expression, brain, glial cells, astrocytes, embryo, placenta, testis, ovary and uterus. In the placenta it is found in the layer of villous cytotrophoblast cells while in the ovary it is found in the cells of the ovarian stroma including the thecal layers around the follicles. Expression is highly repressed in glioma cell lines.

Its subcellular location is the nucleus. It is found in the cytoplasm. Its function is as follows. Induces apoptosis in cooperation with SIAH1A. Acts as a mediator between p53/TP53 and BAX in a neuronal death pathway that is activated by DNA damage. Acts synergistically with TRAF2 and inhibits TNF induced apoptosis through activation of NF-kappa-B. Possesses a tumor suppressing activity in glioma cells. The polypeptide is Paternally-expressed gene 3 protein (PEG3) (Homo sapiens (Human)).